Reading from the N-terminus, the 183-residue chain is Crossover junction endodeoxyribonuclease RuvC (183 aa).

Catalysis depends on residues Asp7, Glu66, and Asp138. The Mg(2+) site is built by Asp7, Glu66, and Asp138.

Belongs to the RuvC family. In terms of assembly, homodimer which binds Holliday junction (HJ) DNA. The HJ becomes 2-fold symmetrical on binding to RuvC with unstacked arms; it has a different conformation from HJ DNA in complex with RuvA. In the full resolvosome a probable DNA-RuvA(4)-RuvB(12)-RuvC(2) complex forms which resolves the HJ. It depends on Mg(2+) as a cofactor.

The protein resides in the cytoplasm. It catalyses the reaction Endonucleolytic cleavage at a junction such as a reciprocal single-stranded crossover between two homologous DNA duplexes (Holliday junction).. In terms of biological role, the RuvA-RuvB-RuvC complex processes Holliday junction (HJ) DNA during genetic recombination and DNA repair. Endonuclease that resolves HJ intermediates. Cleaves cruciform DNA by making single-stranded nicks across the HJ at symmetrical positions within the homologous arms, yielding a 5'-phosphate and a 3'-hydroxyl group; requires a central core of homology in the junction. The consensus cleavage sequence is 5'-(A/T)TT(C/G)-3'. Cleavage occurs on the 3'-side of the TT dinucleotide at the point of strand exchange. HJ branch migration catalyzed by RuvA-RuvB allows RuvC to scan DNA until it finds its consensus sequence, where it cleaves and resolves the cruciform DNA. The chain is Crossover junction endodeoxyribonuclease RuvC from Burkholderia ambifaria (strain ATCC BAA-244 / DSM 16087 / CCUG 44356 / LMG 19182 / AMMD) (Burkholderia cepacia (strain AMMD)).